The sequence spans 343 residues: Methionine import ATP-binding protein MetN (343 aa).

In terms of domain architecture, ABC transporter spans 2–241; sequence IKLFHINKIF…PKTPIAQAFI (240 aa). ATP is bound at residue 38–45; that stretch reads GSSGAGKS.

The protein belongs to the ABC transporter superfamily. Methionine importer (TC 3.A.1.24) family. The complex is composed of two ATP-binding proteins (MetN), two transmembrane proteins (MetI) and a solute-binding protein (MetQ).

It is found in the cell inner membrane. The enzyme catalyses L-methionine(out) + ATP + H2O = L-methionine(in) + ADP + phosphate + H(+). It catalyses the reaction D-methionine(out) + ATP + H2O = D-methionine(in) + ADP + phosphate + H(+). Its function is as follows. Part of the ABC transporter complex MetNIQ involved in methionine import. Responsible for energy coupling to the transport system. The protein is Methionine import ATP-binding protein MetN of Photorhabdus laumondii subsp. laumondii (strain DSM 15139 / CIP 105565 / TT01) (Photorhabdus luminescens subsp. laumondii).